An 805-amino-acid chain; its full sequence is MVVIHGVSLTPRFTLPSRPLNTGFNAGNSTLSFFFKKHPLSRKIFAGKQSAEFDSSSQAISASEKVLVPDNLDDDPRGFSQIFDLESQTMEYTEAVRTEDQTMNVVKERGVKPRIVPPPGDGKKIYEIDPMLRTYNNHLDYRYGQYKRLREEIDKYEGGLEAFSRGYEKLGFSRSDAGITYREWAPGAKAASLIGDFNNWNSNADIMTRNEFGVWEIFLPNNTDGSPAIPHGSRVKIRMDTPSGIKDSIPAWIKFSVQAPGEIPFNGIYYDPPEEEKYVFKHPQPKRPKSLRIYEAHVGMSSTEPMVNTYANFRDDVLPRIKKLGYNAVQIMAIQEHSYYASFGYHVTNFFAPSSRCGTPEELKSLIDRAHELGLVVLMDIVHSHASKNTLDGLNMFDGTDAHYFHSGPRGYHWMWDSRLFNYGSWEVLRYLLSNARWWLEEYKFDGFRFDGVTSMMYTHHGLSVGFTGNYTEYFGLETDVDAVNYLMLVNDMIHGLYPEAITVGEDVSGMPTFCIPVQDGGVGFDYRLHMAIADKWIEMLKKRDEDWQMGDIIYTLTNRRWSEKCISYAESHDQALVGDKTIAFWLMDKDMYDFMAVDRPSTPLIDRGIALHKMIRLITMGLGGEGYLNFMGNEFGHPEWIDFPRGEQRLSDGSVIPGNNFSYDKCRRRFDLGDADYLRYRGLQEFDQAMQHLEENYGFMTSEHQFISRKDEADRVIVFERGDLVFVFNFHWTSSYFDYRIGCSKPGKYKIVLDSDDPLFGGFNRLDRKAEYFTYDGLYDERPCSFMVYAPCRTAVVYALANHD.

The N-terminal 32 residues, M1–S32, are a transit peptide targeting the chloroplast. D451 (nucleophile) is an active-site residue. Catalysis depends on E506, which acts as the Proton donor.

It belongs to the glycosyl hydrolase 13 family. GlgB subfamily. In terms of assembly, monomer. In terms of tissue distribution, expressed in seedlings, roots, stems, leaves, inflorescences, seeds and flowers.

The protein resides in the plastid. It is found in the chloroplast stroma. Its subcellular location is the amyloplast. It catalyses the reaction Transfers a segment of a (1-&gt;4)-alpha-D-glucan chain to a primary hydroxy group in a similar glucan chain.. The protein operates within glycan biosynthesis; starch biosynthesis. Functionally, catalyzes the formation of the alpha-1,6-glucosidic linkages in starch by scission of a 1,4-alpha-linked oligosaccharide from growing alpha-1,4-glucan chains and the subsequent attachment of the oligosaccharide to the alpha-1,6 position. The sequence is that of 1,4-alpha-glucan-branching enzyme 2-2, chloroplastic/amyloplastic (SBE2.2) from Arabidopsis thaliana (Mouse-ear cress).